A 488-amino-acid polypeptide reads, in one-letter code: Coiled-coil domain-containing protein 77 (488 aa).

Residues Gly-21–Arg-48 are disordered. Ser-36 carries the phosphoserine modification. Lys-51 participates in a covalent cross-link: Glycyl lysine isopeptide (Lys-Gly) (interchain with G-Cter in SUMO2). Coiled-coil stretches lie at residues Ser-55–Leu-118 and Lys-208–Cys-488. Positions Phe-192–His-213 are disordered.

This is Coiled-coil domain-containing protein 77 (CCDC77) from Homo sapiens (Human).